A 432-amino-acid polypeptide reads, in one-letter code: Histidine--tRNA ligase (432 aa).

It belongs to the class-II aminoacyl-tRNA synthetase family.

It is found in the cytoplasm. It catalyses the reaction tRNA(His) + L-histidine + ATP = L-histidyl-tRNA(His) + AMP + diphosphate + H(+). The chain is Histidine--tRNA ligase from Halobacterium salinarum (strain ATCC 29341 / DSM 671 / R1).